Consider the following 834-residue polypeptide: MIPQSNPTAQRRSGDAQNTNNVAPNSVATTTDTALTASTQSGSSSNNANKKLEYIGVYKIGPEIGKGSFATVYKCIDTTNNKAVAIKSVYRSKLKSKKLLENLEIEIQILKSMKHPHIVGLLDYKQTTSYFHLVMDYCSMGDLSYFIRRRNNLVKSHPVISSLLHCYPSPEGSHGLNEVLVLHFLRQLSSALQFLRDKSLVHRDIKPQNLLLCPPVHSKQEFIDGEFVGMWELPILKIADFGFARFLPSTSMAETLCGSPLYMAPEILRYEKYNAKADLWSVGAVLYEMTVGKPPFKAGNHIELLKNIEKANDKIKFPSAAQVPEPLKQLIRSLLKYNPTERISFNEFFNDSLITCDLDDNDQPLETSQMDENLFISEYISPIAPAERSQFFKEQKKNDSVVRSPSPTTATTATPRQDNVVQQMTKITSPVPDDFALSIARNSSEFNLKKDDMNLEKDYVVVEKRAVEVNALADELAHAGAGADAIPNSRKNSDVDQTNRLASSQQQTETASYRRSSSSGSQKRPSFSERRISLSLSPTNALTKAIGLASNRLFGLTTNSSHSNVSAIAEDDDSSTSNNDASSFSTVIPSTNNHVLLQKLNLATIGEPGTEFDLGSVSNLDEQILDKLELIANIANAVNLYADVKFSQIIPSPPSSDGIEDDTEMLPPKIIHMISQEGIGLYIKTLSLLGRAMDIAGQWWFEKYDAVHGERPSFETTVRINQIVQWIREKYNISLERLEFLKSKSDFTAEETIEDNEPNGTTRVQQAIFAAALGIARETALKELLRNSTDIECSYVTSIYMLLAILEDLEESDRQEVKKIIEKINSRLKNFMGK.

The disordered stretch occupies residues 1–27 (MIPQSNPTAQRRSGDAQNTNNVAPNSV). In terms of domain architecture, Protein kinase spans 58–354 (YKIGPEIGKG…FNEFFNDSLI (297 aa)). Residues 64 to 72 (IGKGSFATV) and Lys-87 contribute to the ATP site. Catalysis depends on Asp-204, which acts as the Proton acceptor. Disordered stretches follow at residues 394-417 (EQKK…TPRQ) and 483-532 (ADAI…ERRI). Positions 401 to 416 (VVRSPSPTTATTATPR) are enriched in low complexity. Residues 495 to 511 (VDQTNRLASSQQQTETA) are compositionally biased toward polar residues. The span at 513–525 (YRRSSSSGSQKRP) shows a compositional bias: low complexity.

The protein belongs to the protein kinase superfamily. Ser/Thr protein kinase family. APG1/unc-51/ULK1 subfamily. As to quaternary structure, homodimer. Forms a ternary complex with ATG13 and ATG17.

Its subcellular location is the cytoplasm. It is found in the preautophagosomal structure membrane. It catalyses the reaction L-seryl-[protein] + ATP = O-phospho-L-seryl-[protein] + ADP + H(+). The catalysed reaction is L-threonyl-[protein] + ATP = O-phospho-L-threonyl-[protein] + ADP + H(+). In terms of biological role, serine/threonine protein kinase involved in the cytoplasm to vacuole transport (Cvt) and found to be essential in autophagy, where it is required for the formation of autophagosomes. Involved in the clearance of protein aggregates which cannot be efficiently cleared by the proteasome. Required for selective autophagic degradation of the nucleus (nucleophagy) as well as for mitophagy which contributes to regulate mitochondrial quantity and quality by eliminating the mitochondria to a basal level to fulfill cellular energy requirements and preventing excess ROS production. Also involved in endoplasmic reticulum-specific autophagic process, in selective removal of ER-associated degradation (ERAD) substrates. Plays a key role in ATG9 and ATG23 cycling through the pre-autophagosomal structure and is necessary to promote ATG18 binding to ATG9 through phosphorylation of ATG9. Catalyzes phosphorylation of ATG4, decreasing the interaction between ATG4 and ATG8 and impairing deconjugation of PE-conjugated forms of ATG8. The sequence is that of Serine/threonine-protein kinase ATG1 (ATG1) from Candida albicans (strain SC5314 / ATCC MYA-2876) (Yeast).